The following is a 421-amino-acid chain: MALVVQKYGGSSLESAERIRNVAERIVATKKAGNDVVVVCSAMGDTTDELLDLAAAVNPVPPAREMDMLLTAGERISNALVAMAIESLGAEAQSFTGSQAGVLTTERHGNARIVDVTPGRVREALDEGKICIVAGFQGVNKETRDVTTLGRGGSDTTAVALAAALGADVCEIYSDVDGVYTADPRIVPNAQKLERLSFEEMLELAAVGSKILVLRSVEYARAFNVPMRVRSSYSNDPGTLIAGSMEDIPMEEAVLTGVATDKSEAKVTVLGIPDKPGEAAKVFRALADAEINIDMVLQNVSSVEDGTTDITFTCPRSDGPRAMELLKKMQQQGDWTNVLYDDQVGKVSLVGAGMKSHPGVTAEFMEALRDVNVNVELISTSEIRISVLIREDDLDKSAKALHEKFQLGGDEEATVYAGTGR.

7–10 (KYGG) lines the ATP pocket. 25-30 (RIVATK) lines the substrate pocket. Ser41 is an ATP binding site. Substrate contacts are provided by residues 45–49 (DTTDE), Glu74, 125–126 (LD), 151–154 (RGGS), and Ser154. ATP-binding positions include 174 to 175 (SD), 180 to 185 (YTADPR), and Lys210. ACT domains are found at residues 267 to 343 (VTVL…YDDQ) and 349 to 421 (LVGA…GTGR). Residues Asp274, 274–279 (DKPGEA), 292–294 (NID), Gln298, 360–361 (VT), 374–375 (NV), and 381–382 (SE) each bind substrate.

This sequence belongs to the aspartokinase family. Tetramer consisting of 2 isoforms Alpha (catalytic and regulation) and of a homodimer of 2 isoforms Beta (regulation).

The catalysed reaction is L-aspartate + ATP = 4-phospho-L-aspartate + ADP. Its pathway is amino-acid biosynthesis; L-lysine biosynthesis via DAP pathway; (S)-tetrahydrodipicolinate from L-aspartate: step 1/4. The protein operates within amino-acid biosynthesis; L-methionine biosynthesis via de novo pathway; L-homoserine from L-aspartate: step 1/3. It functions in the pathway amino-acid biosynthesis; L-threonine biosynthesis; L-threonine from L-aspartate: step 1/5. Its function is as follows. Catalyzes the phosphorylation of the beta-carboxyl group of aspartic acid with ATP to yield 4-phospho-L-aspartate, which is involved in the branched biosynthetic pathway leading to the biosynthesis of amino acids lysine, threonine, isoleucine and methionine. This chain is Aspartokinase (lysC), found in Corynebacterium efficiens (strain DSM 44549 / YS-314 / AJ 12310 / JCM 11189 / NBRC 100395).